A 154-amino-acid chain; its full sequence is Large ribosomal subunit protein uL30 (154 aa).

Belongs to the universal ribosomal protein uL30 family. In terms of assembly, part of the 50S ribosomal subunit.

The chain is Large ribosomal subunit protein uL30 from Methanococcus maripaludis (strain C5 / ATCC BAA-1333).